We begin with the raw amino-acid sequence, 287 residues long: Isopentenyl-diphosphate Delta-isomerase 1, chloroplastic (287 aa).

Residues 1–51 (MTLLLNTTAKLYIAPRTLPFTSSSTFARSPFLRIPSLLKPLSPLTARVSLS) constitute a chloroplast transit peptide. Residue Lys-90 coordinates substrate. Residues His-94 and His-106 each contribute to the Mg(2+) site. Positions 104–256 (LLHRAFSVFL…GLKLSPWFRL (153 aa)) constitute a Nudix hydrolase domain. Residues Arg-125 and Lys-129 each contribute to the substrate site. Cys-141 is an active-site residue. Ser-142 is a substrate binding site. The short motif at 142-172 (SHPLYRESELIDEESLGARNAAQRKLLDELG) is the Nudix box element. The Mg(2+) site is built by Glu-201 and Glu-203. The active site involves Glu-203.

This sequence belongs to the IPP isomerase type 1 family. Monomer. The cofactor is Mg(2+). As to expression, mainly expressed in roots and trichomes and, to a lower extent, in leaves, flowers and stems.

The protein resides in the plastid. It is found in the chloroplast. The enzyme catalyses isopentenyl diphosphate = dimethylallyl diphosphate. Its pathway is isoprenoid biosynthesis; dimethylallyl diphosphate biosynthesis; dimethylallyl diphosphate from isopentenyl diphosphate: step 1/1. It participates in porphyrin-containing compound metabolism; chlorophyll biosynthesis. In terms of biological role, catalyzes the 1,3-allylic rearrangement of the homoallylic substrate isopentenyl (IPP) to its highly electrophilic allylic isomer, dimethylallyl diphosphate (DMAPP). In Cannabis sativa (Hemp), this protein is Isopentenyl-diphosphate Delta-isomerase 1, chloroplastic.